The sequence spans 391 residues: uncharacterized protein (391 aa).

2 WD repeats span residues 137–179 and 182–222; these read VNDI…PILA and PLSS…SAEE.

It localises to the cytoplasm. The protein resides in the nucleus. This is an uncharacterized protein from Schizosaccharomyces pombe (strain 972 / ATCC 24843) (Fission yeast).